A 518-amino-acid polypeptide reads, in one-letter code: Glutamate--cysteine ligase (518 aa).

The protein belongs to the glutamate--cysteine ligase type 1 family. Type 1 subfamily.

It catalyses the reaction L-cysteine + L-glutamate + ATP = gamma-L-glutamyl-L-cysteine + ADP + phosphate + H(+). It participates in sulfur metabolism; glutathione biosynthesis; glutathione from L-cysteine and L-glutamate: step 1/2. This is Glutamate--cysteine ligase from Salmonella typhi.